A 120-amino-acid polypeptide reads, in one-letter code: Large ribosomal subunit protein uL18 (120 aa).

It belongs to the universal ribosomal protein uL18 family. As to quaternary structure, part of the 50S ribosomal subunit; part of the 5S rRNA/L5/L18/L25 subcomplex. Contacts the 5S and 23S rRNAs.

Functionally, this is one of the proteins that bind and probably mediate the attachment of the 5S RNA into the large ribosomal subunit, where it forms part of the central protuberance. In Treponema denticola (strain ATCC 35405 / DSM 14222 / CIP 103919 / JCM 8153 / KCTC 15104), this protein is Large ribosomal subunit protein uL18.